The chain runs to 517 residues: Amidophosphoribosyltransferase (517 aa).

Met1 carries the N-acetylmethionine modification. The propeptide occupies 1-11 (MELEESGIREE). Cys12 functions as the Nucleophile in the catalytic mechanism. The Glutamine amidotransferase type-2 domain occupies 12–261 (CGVFGCIASG…PGEIVEISRH (250 aa)). Cys280 lines the [4Fe-4S] cluster pocket. Mg(2+)-binding residues include Ser327, Asp389, and Asp390. 3 residues coordinate [4Fe-4S] cluster: Cys426, Cys503, and Cys506.

This sequence in the C-terminal section; belongs to the purine/pyrimidine phosphoribosyltransferase family. Homotetramer. It depends on Mg(2+) as a cofactor. [4Fe-4S] cluster serves as cofactor. In terms of tissue distribution, expressed at a high level in brain, heart, liver and stomach.

The enzyme catalyses 5-phospho-beta-D-ribosylamine + L-glutamate + diphosphate = 5-phospho-alpha-D-ribose 1-diphosphate + L-glutamine + H2O. The protein operates within purine metabolism; IMP biosynthesis via de novo pathway; N(1)-(5-phospho-D-ribosyl)glycinamide from 5-phospho-alpha-D-ribose 1-diphosphate: step 1/2. With respect to regulation, activated by the substrate 5-phospho-alpha-D-ribosyl-1-pyrophosphate and inhibited by the purine ribonucleotides, the end products of purine biosynthesis. Its function is as follows. Catalyzes the formation of phosphoribosylamine from phosphoribosylpyrophosphate (PRPP) and glutamine. This Rattus norvegicus (Rat) protein is Amidophosphoribosyltransferase (Ppat).